Reading from the N-terminus, the 160-residue chain is Large ribosomal subunit protein uL15 (160 aa).

A compositionally biased stretch (basic and acidic residues) spans 1-13 (MKLHELSDNDGAA). A disordered region spans residues 1 to 42 (MKLHELSDNDGAAKKRKRVGRGPGSGTGKMGGRGIKGQKSRS). Positions 21–35 (RGPGSGTGKMGGRGI) are enriched in gly residues.

The protein belongs to the universal ribosomal protein uL15 family. Part of the 50S ribosomal subunit.

Functionally, binds to the 23S rRNA. The polypeptide is Large ribosomal subunit protein uL15 (Roseobacter denitrificans (strain ATCC 33942 / OCh 114) (Erythrobacter sp. (strain OCh 114))).